Here is a 446-residue protein sequence, read N- to C-terminus: Glutamyl-tRNA reductase 2 (446 aa).

Substrate is bound by residues 53–56 (TCNR), Ser105, 110–112 (EQQ), and Gln116. Residue Cys54 is the Nucleophile of the active site. Position 185 to 190 (185 to 190 (GAGKMG)) interacts with NADP(+). A disordered region spans residues 409 to 446 (AAELFGIENETAGGERREGGAEGAAAAPGAGPVRSQGT). The segment covering 431-440 (GAAAAPGAGP) has biased composition (low complexity).

Belongs to the glutamyl-tRNA reductase family. Homodimer.

It catalyses the reaction (S)-4-amino-5-oxopentanoate + tRNA(Glu) + NADP(+) = L-glutamyl-tRNA(Glu) + NADPH + H(+). Its pathway is porphyrin-containing compound metabolism; protoporphyrin-IX biosynthesis; 5-aminolevulinate from L-glutamyl-tRNA(Glu): step 1/2. Functionally, catalyzes the NADPH-dependent reduction of glutamyl-tRNA(Glu) to glutamate 1-semialdehyde (GSA). In Anaeromyxobacter dehalogenans (strain 2CP-C), this protein is Glutamyl-tRNA reductase 2.